We begin with the raw amino-acid sequence, 139 residues long: Protein archease (139 aa).

Ca(2+)-binding residues include Asp-12, Asp-138, and Ile-139.

The protein belongs to the archease family.

In terms of biological role, activates the tRNA-splicing ligase complex by facilitating the enzymatic turnover of catalytic subunit RtcB. Acts by promoting the guanylylation of RtcB, a key intermediate step in tRNA ligation. Can also alter the NTP specificity of RtcB such that ATP, dGTP or ITP is used efficiently. This is Protein archease from Saccharolobus solfataricus (strain ATCC 35092 / DSM 1617 / JCM 11322 / P2) (Sulfolobus solfataricus).